We begin with the raw amino-acid sequence, 428 residues long: MSAIVDIIGREILDSRGNPTVECDVLLESGAMGRASVPSGASTGSREAIELRDGDKGRYLGKGVLRAVENLNTEISEALMGLDAQEQTFVDRTLIELDGTDSKERLGANAMLAASMAVARAAADESGLSLYRYFGGSGPMSMPVPMMNVINGGAHANNTLDLQELMILPVGAASFREALRWGAEVFHMLKKLIHDQGMSTAVGDEGGFAPNVASHEAAIQLILKAITEAGYEPGTQIALGLDCASSEFYRDGKYTLAGEGGVSLSSQEFANLLATWCDKYPIISIEDGMAENDWDGWKLLTDQLGKKVQLVGDDLFVTNTRILREGIQKGVANSILIKINQIGTLTETFAAIEMAKRAGYTAVVSHRSGETEDSTIADIAVATNAMQIKTGSLSRSDRMAKYNQLLRIEEELAEVASYPGLEAFYNLR.

Q163 contacts (2R)-2-phosphoglycerate. The active-site Proton donor is E205. D242, E286, and D313 together coordinate Mg(2+). The (2R)-2-phosphoglycerate site is built by K338, R367, S368, and K389. K338 acts as the Proton acceptor in catalysis.

Belongs to the enolase family. Requires Mg(2+) as cofactor.

The protein localises to the cytoplasm. It localises to the secreted. The protein resides in the cell surface. It carries out the reaction (2R)-2-phosphoglycerate = phosphoenolpyruvate + H2O. It functions in the pathway carbohydrate degradation; glycolysis; pyruvate from D-glyceraldehyde 3-phosphate: step 4/5. In terms of biological role, catalyzes the reversible conversion of 2-phosphoglycerate (2-PG) into phosphoenolpyruvate (PEP). It is essential for the degradation of carbohydrates via glycolysis. This is Enolase from Bordetella bronchiseptica (strain ATCC BAA-588 / NCTC 13252 / RB50) (Alcaligenes bronchisepticus).